Reading from the N-terminus, the 955-residue chain is Auxin response factor 11 (955 aa).

The segment at residues 143 to 245 is a DNA-binding region (TF-B3); the sequence is FCKNLTASDT…QLLLGVRRAT (103 aa). Positions 518–543 are enriched in polar residues; sequence ESKLNATSRDPRNTDSYTSRSTSEQN. Disordered regions lie at residues 518 to 573 and 609 to 646; these read ESKL…LSSA and TQGNFVGQPHGHQVEQKGVLSPPKVESSKSPDGGKSVN. Residues 551 to 560 show a composition bias toward basic residues; sequence KTRRSKKGLP. The PB1 domain maps to 852 to 936; that stretch reads RTYTKVQKQG…RCIRILSPSE (85 aa).

This sequence belongs to the ARF family. In terms of assembly, homodimers and heterodimers.

It localises to the nucleus. Its function is as follows. Auxin response factors (ARFs) are transcriptional factors that bind specifically to the DNA sequence 5'-TGTCTC-3' found in the auxin-responsive promoter elements (AuxREs). The chain is Auxin response factor 11 (ARF11) from Oryza sativa subsp. indica (Rice).